The following is a 129-amino-acid chain: GRGLLPFVLLALGIXAPWAVEGAENALKGGACPPRKIVQCLRYEKPKCTSDWQCPDKKKCCRDTCAIKCLNPVAITNPVKVKPGKCPVVYGQCMMLNPPNHCKTDSQCLGDLKCCKSMCGKVCLTPVKA.

The signal sequence occupies residues 1-22; sequence GRGLLPFVLLALGIXAPWAVEG. WAP domains are found at residues 25-73 and 79-127; these read NALK…LNPV and VKVK…LTPV. 8 disulfides stabilise this stretch: cysteine 32–cysteine 61, cysteine 40–cysteine 65, cysteine 48–cysteine 60, cysteine 54–cysteine 69, cysteine 86–cysteine 115, cysteine 93–cysteine 119, cysteine 102–cysteine 114, and cysteine 108–cysteine 123. The elastase inhibitory domain stretch occupies residues 81–129; that stretch reads VKPGKCPVVYGQCMMLNPPNHCKTDSQCLGDLKCCKSMCGKVCLTPVKA.

In terms of assembly, interacts with GRN; interaction protects progranulin from proteolysis. Found in pregnant endometrium and myometrium, placenta, allantoic fluids, fetal cord blood, and fetal liver. Also found in uterus and lung.

The protein localises to the secreted. Functionally, acid-stable proteinase inhibitor with strong affinities for trypsin, chymotrypsin, elastase, and cathepsin G. Modulates the inflammatory and immune responses after bacterial infection, and after infection by the intracellular parasite L.major. Down-regulates responses to bacterial lipopolysaccharide (LPS). Plays a role in regulating the activation of NF-kappa-B and inflammatory responses. Has antimicrobial activity against mycobacteria, but not against salmonella. Contributes to normal resistance against infection by M.tuberculosis. Required for normal resistance to infection by L.major. Required for normal wound healing, probably by preventing tissue damage by limiting protease activity. Together with ELANE, required for normal differentiation and proliferation of bone marrow myeloid cells. This Sus scrofa (Pig) protein is Antileukoproteinase (SLPI).